Reading from the N-terminus, the 298-residue chain is Serine/threonine-protein kinase 1 (298 aa).

In terms of domain architecture, Protein kinase spans 38–276 (FIATRPMFEG…FKSLVSHPWF (239 aa)). Residues 45-53 (FEGGRNNVF) and Lys65 each bind ATP. Asp152 functions as the Proton acceptor in the catalytic mechanism.

This sequence belongs to the protein kinase superfamily. Ser/Thr protein kinase family.

It localises to the virion. The protein localises to the host cytoplasm. It carries out the reaction L-seryl-[protein] + ATP = O-phospho-L-seryl-[protein] + ADP + H(+). It catalyses the reaction L-threonyl-[protein] + ATP = O-phospho-L-threonyl-[protein] + ADP + H(+). Essential for viral replication. It may mediate the virus progression through DNA replication. This chain is Serine/threonine-protein kinase 1, found in African swine fever virus (strain Badajoz 1971 Vero-adapted) (Ba71V).